The primary structure comprises 874 residues: Bifunctional uridylyltransferase/uridylyl-removing enzyme (874 aa).

A uridylyltransferase region spans residues 1–332; the sequence is MPLQSPLTFS…NGGATENAEI (332 aa). The tract at residues 333–692 is uridylyl-removing; the sequence is LDADFQRRGS…ISKKATRGGT (360 aa). The HD domain maps to 451–573; sequence VDEHSIRLLK…VRDEESLEYL (123 aa). ACT domains lie at 693–777 and 800–874; these read EVFV…RTPN and LMEF…AVTA.

It belongs to the GlnD family. Mg(2+) serves as cofactor.

It carries out the reaction [protein-PII]-L-tyrosine + UTP = [protein-PII]-uridylyl-L-tyrosine + diphosphate. The catalysed reaction is [protein-PII]-uridylyl-L-tyrosine + H2O = [protein-PII]-L-tyrosine + UMP + H(+). Its activity is regulated as follows. Uridylyltransferase (UTase) activity is inhibited by glutamine, while glutamine activates uridylyl-removing (UR) activity. Modifies, by uridylylation and deuridylylation, the PII regulatory proteins (GlnB and homologs), in response to the nitrogen status of the cell that GlnD senses through the glutamine level. Under low glutamine levels, catalyzes the conversion of the PII proteins and UTP to PII-UMP and PPi, while under higher glutamine levels, GlnD hydrolyzes PII-UMP to PII and UMP (deuridylylation). Thus, controls uridylylation state and activity of the PII proteins, and plays an important role in the regulation of nitrogen assimilation and metabolism. The protein is Bifunctional uridylyltransferase/uridylyl-removing enzyme of Vibrio parahaemolyticus serotype O3:K6 (strain RIMD 2210633).